The sequence spans 187 residues: MRTDKEIFVSVDVETSGPIPGKYSMLSIGACVAFEPSKQFSCYLKPISEDFIPAAMEVTGLSLEKLHVDGLDPVDAMVQFKEWINSVVKEDETVVFVGFNASFDWSFINYYFHVYLGDNPFGIAALDIKSMYFGVSHASWRLTRSSEIAKVVKPETYGDHDALHDARYQAELFRLIDKLSEKKKLDR.

An Exonuclease domain is found at 9 to 173 (VSVDVETSGP…HDARYQAELF (165 aa)). Mg(2+) is bound by residues Asp12, Met25, His160, and Asp165. His160 acts as the Proton donor/acceptor in catalysis.

Belongs to the Cap18 exonuclease family. In terms of assembly, homodimer.

Effector component of a CBASS antivirus system. CBASS (cyclic oligonucleotide-based antiphage signaling system) provides immunity against bacteriophage. The CD-NTase protein synthesizes cyclic nucleotides in response to infection; these serve as specific second messenger signals. The signals activate a diverse range of effectors, leading to bacterial cell death and thus abortive phage infection. A type III CBASS system. A sequence non-specific 3'-5' DNA exonuclease that preferentially degrades ssDNA with 3' overhangs or a mismatch at the 3' end. Expression of this CBASS system (Cap17-CapW-CdnC-Cap7-Cap6-Cap18-Cap19) in a susceptible E.coli (strain JP313) confers resistance to bacteriophage lambda cI--. This Escherichia coli protein is 3'-5' DNA exonuclease Cap18.